The chain runs to 231 residues: Probable tetraspanin tspE (231 aa).

Over 1–21 (MTFVDNFEFNQNTPRLVRGPF) the chain is Cytoplasmic. Residues 22-42 (IILNSIIFSLSFILLCSTGII) traverse the membrane as a helical segment. The Extracellular portion of the chain corresponds to 43 to 58 (IYYLNEYYLVKDLTIP). Residues 59 to 79 (LGSFILSAYMVITTIVGGIAI) traverse the membrane as a helical segment. The Cytoplasmic segment spans residues 80 to 83 (WKKK). Residues 84 to 104 (LGLHLTFMVFLVVLIVCLVGV) traverse the membrane as a helical segment. Topologically, residues 105-195 (SAKMIVDSGN…VESILKYLGY (91 aa)) are extracellular. A helical membrane pass occupies residues 196-216 (YGIVLSVIELILLILSGFFLL). Over 217 to 231 (KTNKNVKSKSFILQD) the chain is Cytoplasmic.

Belongs to the tetraspanin (TM4SF) family.

Its subcellular location is the membrane. The polypeptide is Probable tetraspanin tspE (tspE) (Dictyostelium discoideum (Social amoeba)).